We begin with the raw amino-acid sequence, 368 residues long: MSLYPIYNFSAGPAVLPEAVLETARQEMLDYNGTGFPVMAMSHRSEMFLSILHHAEQDLRQLLKVPDNYKILFLQGGATTQFNMAAMNLAHGFRTADAVVTGNWSRIAYEQMSRLTDTEIRLAAHGGEQFDYLDLPPVETWDVAPDSAFVHFAVNETVNGLQYREVPRLSEGMPPLVCDMSSEILSREFDVADYGLIYAGAQKNIGPAGVTVVIVREDLLERCPNDIPDVFNYRSHINRDGMYNTPSTYAIYMSGLVFRWLQAQGGVKKIEAVNRLKAQTLYETIDGSGGFYINRIRPNARSKMNVVFQTGDEELDRRFVLEAELQGLCLLKGYKTVGGMRASIYNAMPLEGVRALADFMRDFQRRYG.

R44 contacts L-glutamate. Pyridoxal 5'-phosphate-binding positions include 78–79 (AT), W104, T157, D179, and Q202. Residue K203 is modified to N6-(pyridoxal phosphate)lysine. 244–245 (NT) contacts pyridoxal 5'-phosphate.

Belongs to the class-V pyridoxal-phosphate-dependent aminotransferase family. SerC subfamily. In terms of assembly, homodimer. Pyridoxal 5'-phosphate is required as a cofactor.

It is found in the cytoplasm. The enzyme catalyses O-phospho-L-serine + 2-oxoglutarate = 3-phosphooxypyruvate + L-glutamate. The catalysed reaction is 4-(phosphooxy)-L-threonine + 2-oxoglutarate = (R)-3-hydroxy-2-oxo-4-phosphooxybutanoate + L-glutamate. It functions in the pathway amino-acid biosynthesis; L-serine biosynthesis; L-serine from 3-phospho-D-glycerate: step 2/3. The protein operates within cofactor biosynthesis; pyridoxine 5'-phosphate biosynthesis; pyridoxine 5'-phosphate from D-erythrose 4-phosphate: step 3/5. Functionally, catalyzes the reversible conversion of 3-phosphohydroxypyruvate to phosphoserine and of 3-hydroxy-2-oxo-4-phosphonooxybutanoate to phosphohydroxythreonine. This chain is Phosphoserine aminotransferase, found in Neisseria meningitidis serogroup A / serotype 4A (strain DSM 15465 / Z2491).